We begin with the raw amino-acid sequence, 257 residues long: Hydroxyethylthiazole kinase (257 aa).

Met42 is a binding site for substrate. 2 residues coordinate ATP: Arg117 and Thr163. Ala190 contacts substrate.

The protein belongs to the Thz kinase family. Mg(2+) is required as a cofactor.

The enzyme catalyses 5-(2-hydroxyethyl)-4-methylthiazole + ATP = 4-methyl-5-(2-phosphooxyethyl)-thiazole + ADP + H(+). Its pathway is cofactor biosynthesis; thiamine diphosphate biosynthesis; 4-methyl-5-(2-phosphoethyl)-thiazole from 5-(2-hydroxyethyl)-4-methylthiazole: step 1/1. Its function is as follows. Catalyzes the phosphorylation of the hydroxyl group of 4-methyl-5-beta-hydroxyethylthiazole (THZ). This chain is Hydroxyethylthiazole kinase, found in Roseobacter denitrificans (strain ATCC 33942 / OCh 114) (Erythrobacter sp. (strain OCh 114)).